The following is a 195-amino-acid chain: uncharacterized protein (195 aa).

Residues 1-11 (MDYIVSPTSSE) show a composition bias toward polar residues. The segment at 1–118 (MDYIVSPTSS…LDTEGGFVLS (118 aa)) is disordered. The span at 35-46 (SPEDITDSDEQN) shows a compositional bias: acidic residues. Low complexity predominate over residues 47–63 (DTTTTTSEMSSTSSVPS). The segment covering 82 to 93 (SDSKLIFDSDNK) has biased composition (basic and acidic residues). The span at 94–110 (DQDDEDDEDDEELEGLD) shows a compositional bias: acidic residues.

This is an uncharacterized protein from Acanthamoeba polyphaga mimivirus (APMV).